The following is a 388-amino-acid chain: Succinate--CoA ligase [ADP-forming] subunit beta (388 aa).

The 236-residue stretch at 9-244 (KQLFARYGLP…QSQEDPREAQ (236 aa)) folds into the ATP-grasp domain. Residues K46, 53–55 (GRG), E99, T102, and E107 each bind ATP. Mg(2+) is bound by residues N199 and D213. Residues N264 and 321 to 323 (GIV) each bind substrate.

The protein belongs to the succinate/malate CoA ligase beta subunit family. Heterotetramer of two alpha and two beta subunits. It depends on Mg(2+) as a cofactor.

It catalyses the reaction succinate + ATP + CoA = succinyl-CoA + ADP + phosphate. The enzyme catalyses GTP + succinate + CoA = succinyl-CoA + GDP + phosphate. It functions in the pathway carbohydrate metabolism; tricarboxylic acid cycle; succinate from succinyl-CoA (ligase route): step 1/1. Its function is as follows. Succinyl-CoA synthetase functions in the citric acid cycle (TCA), coupling the hydrolysis of succinyl-CoA to the synthesis of either ATP or GTP and thus represents the only step of substrate-level phosphorylation in the TCA. The beta subunit provides nucleotide specificity of the enzyme and binds the substrate succinate, while the binding sites for coenzyme A and phosphate are found in the alpha subunit. The sequence is that of Succinate--CoA ligase [ADP-forming] subunit beta from Klebsiella pneumoniae (strain 342).